A 327-amino-acid chain; its full sequence is PDZ and LIM domain protein 1 (327 aa).

T2 is subject to N-acetylthreonine. Residues 3 to 85 (TQQIVLQGPG…NMTLTVSRSE (83 aa)) form the PDZ domain. 2 positions are modified to phosphoserine: S90 and S130. A Phosphotyrosine modification is found at Y142. Residues 161–186 (VESKTSASGEEANSRPSAQPHPSGGL) form a disordered region. The 60-residue stretch at 256–315 (PICDKCGTGIVGVFVKLRDHHRHPECYVCTDCGINLKQKGHFFVGDQIYCEKHARERVTP) folds into the LIM zinc-binding domain. Zn(2+) is bound by residues C258, C261, H278, C281, C284, C287, C305, and H308. Residue T314 is modified to Phosphothreonine. Y319 carries the post-translational modification Phosphotyrosine.

As to quaternary structure, interacts with ACTN1. Interacts with ACTN2 and ACTN4. Interacts with PDLIM4. As to expression, expressed most abundantly in heart, lung and liver, moderately in spleen and skeletal muscle, and at extremely low levels (if at all) in testis and brain tissues.

The protein resides in the cytoplasm. Its subcellular location is the cytoskeleton. The protein localises to the myofibril. It is found in the sarcomere. It localises to the z line. In terms of biological role, cytoskeletal protein that may act as an adapter that brings other proteins (like kinases) to the cytoskeleton. Involved in assembly, disassembly and directioning of stress fibers in fibroblasts. Required for the localization of ACTN1 and PALLD to stress fibers. Required for cell migration and in maintaining cell polarity of fibroblasts. This chain is PDZ and LIM domain protein 1 (Pdlim1), found in Rattus norvegicus (Rat).